A 399-amino-acid chain; its full sequence is CCA-adding enzyme (399 aa).

Residues Gly32 and Arg35 each contribute to the ATP site. The CTP site is built by Gly32 and Arg35. 2 residues coordinate Mg(2+): Asp45 and Asp47. Residues Arg116, Asp159, Arg162, Arg165, and Arg168 each contribute to the ATP site. Positions 116, 159, 162, 165, and 168 each coordinate CTP.

The protein belongs to the tRNA nucleotidyltransferase/poly(A) polymerase family. Bacterial CCA-adding enzyme type 3 subfamily. As to quaternary structure, homodimer. The cofactor is Mg(2+).

The catalysed reaction is a tRNA precursor + 2 CTP + ATP = a tRNA with a 3' CCA end + 3 diphosphate. It carries out the reaction a tRNA with a 3' CCA end + 2 CTP + ATP = a tRNA with a 3' CCACCA end + 3 diphosphate. Functionally, catalyzes the addition and repair of the essential 3'-terminal CCA sequence in tRNAs without using a nucleic acid template. Adds these three nucleotides in the order of C, C, and A to the tRNA nucleotide-73, using CTP and ATP as substrates and producing inorganic pyrophosphate. tRNA 3'-terminal CCA addition is required both for tRNA processing and repair. Also involved in tRNA surveillance by mediating tandem CCA addition to generate a CCACCA at the 3' terminus of unstable tRNAs. While stable tRNAs receive only 3'-terminal CCA, unstable tRNAs are marked with CCACCA and rapidly degraded. The sequence is that of CCA-adding enzyme from Streptococcus pneumoniae (strain CGSP14).